A 340-amino-acid chain; its full sequence is Putative phosphatidylcholine:ceramide cholinephosphotransferase 3 (340 aa).

The interval 1–25 (MGSVSKTVISARGASPDDEQNGTKN) is disordered. A run of 4 helical transmembrane segments spans residues 36–56 (CIFL…VLAY), 81–101 (SSLG…LLVI), 178–198 (LLFS…AYYL), and 202–222 (IKPL…CMTI). H183 is an active-site residue. The Cytoplasmic segment spans residues 223 to 340 (SRTHYTIDVV…SSSSTYPLPC (118 aa)). Catalysis depends on residues H226 and D230. Residues 294–313 (STPRGQERGGASAESSDSSV) are disordered.

This sequence belongs to the sphingomyelin synthase family.

The protein resides in the membrane. It carries out the reaction an N-acyl-sphingoid base + a 1,2-diacyl-sn-glycero-3-phosphocholine = an N-(acyl)-sphingosylphosphocholine + a 1,2-diacyl-sn-glycerol. It catalyses the reaction an N-acylsphing-4-enine + a 1,2-diacyl-sn-glycero-3-phosphocholine = a sphingomyelin + a 1,2-diacyl-sn-glycerol. The enzyme catalyses an N-acyl-15-methylhexadecasphing-4-enine + a 1,2-diacyl-sn-glycero-3-phosphocholine = an N-acyl-15-methylhexadecasphing-4-enine-1-phosphocholine + a 1,2-diacyl-sn-glycerol. Its pathway is lipid metabolism; sphingolipid metabolism. Bidirectional lipid cholinephosphotransferase capable of converting phosphatidylcholine (PC) and ceramide to sphingomyelin (SM) and diacylglycerol (DAG) and vice versa. Direction is dependent on the relative concentrations of DAG and ceramide as phosphocholine acceptors. Directly and specifically recognizes the choline head group on the substrate. Also requires two fatty chains on the choline-P donor molecule in order to be recognized efficiently as a substrate. Does not function strictly as a SM synthase. C.elegans contains specific sphingoid bases, which are unique or different in structure compared to the sphingoid bases found in other animals. Two examples of these distinctive compounds are: 15-methylhexadecasphinganine and 15-methylhexadecasphing-4-enine. The chain is Putative phosphatidylcholine:ceramide cholinephosphotransferase 3 (sms-3) from Caenorhabditis elegans.